Consider the following 291-residue polypeptide: Prolyl 4-hydroxylase 5 (291 aa).

At 1–22 (MASKSKQHLRYQPRKSVSRSTQ) the chain is on the cytoplasmic side. Residues 23 to 43 (AFTVLILLLVVILILLGLGIL) form a helical; Signal-anchor for type II membrane protein membrane-spanning segment. Residues 44–291 (SLPNANRNSS…KWFHVHEFKV (248 aa)) lie on the Extracellular side of the membrane. Asparagine 51 carries N-linked (GlcNAc...) asparagine glycosylation. In terms of domain architecture, Fe2OG dioxygenase spans 163-286 (NGEGLQVLHY…KWSSTKWFHV (124 aa)). Fe cation contacts are provided by histidine 181 and aspartate 183. Asparagine 222 is a glycosylation site (N-linked (GlcNAc...) asparagine). Residue histidine 267 coordinates Fe cation. Lysine 277 is a 2-oxoglutarate binding site.

This sequence belongs to the P4HA family. The cofactor is Fe(2+). L-ascorbate is required as a cofactor. As to expression, expressed in epidermal root hair cells (trichoblasts).

It is found in the endoplasmic reticulum membrane. It localises to the golgi apparatus membrane. It catalyses the reaction L-prolyl-[collagen] + 2-oxoglutarate + O2 = trans-4-hydroxy-L-prolyl-[collagen] + succinate + CO2. Catalyzes the post-translational formation of 4-hydroxyproline in -Xaa-Pro-Gly- sequences in proline-rich peptide sequences of plant glycoproteins and other proteins. Hydroxyprolines are important constituent of many plant cell wall glycoproteins such as extensins, hydroxyproline-rich glycoproteins, lectins and arabinogalactan proteins. Possesses high affinity for leucine-rich repeat and proline-rich extensins of root cell walls that are essential for root hair development. Hydroxyprolines define the subsequent O-glycosylation sites by arabinosyltransferases which elongate the O-arabinosides on extensins. The chain is Prolyl 4-hydroxylase 5 from Arabidopsis thaliana (Mouse-ear cress).